Consider the following 199-residue polypeptide: Fe/S biogenesis protein NfuA (199 aa).

Cysteine 151 and cysteine 154 together coordinate [4Fe-4S] cluster.

The protein belongs to the NfuA family. As to quaternary structure, homodimer. Requires [4Fe-4S] cluster as cofactor.

In terms of biological role, involved in iron-sulfur cluster biogenesis. Binds a 4Fe-4S cluster, can transfer this cluster to apoproteins, and thereby intervenes in the maturation of Fe/S proteins. Could also act as a scaffold/chaperone for damaged Fe/S proteins. In Xanthomonas campestris pv. campestris (strain 8004), this protein is Fe/S biogenesis protein NfuA.